Here is a 184-residue protein sequence, read N- to C-terminus: 3-hydroxydecanoyl-[acyl-carrier-protein] dehydratase (184 aa).

Residue His-77 is part of the active site.

This sequence belongs to the thioester dehydratase family. FabA subfamily. As to quaternary structure, homodimer.

The protein resides in the cytoplasm. The catalysed reaction is a (3R)-hydroxyacyl-[ACP] = a (2E)-enoyl-[ACP] + H2O. The enzyme catalyses (3R)-hydroxydecanoyl-[ACP] = (2E)-decenoyl-[ACP] + H2O. It carries out the reaction (2E)-decenoyl-[ACP] = (3Z)-decenoyl-[ACP]. It functions in the pathway lipid metabolism; fatty acid biosynthesis. Functionally, necessary for the introduction of cis unsaturation into fatty acids. Catalyzes the dehydration of (3R)-3-hydroxydecanoyl-ACP to E-(2)-decenoyl-ACP and then its isomerization to Z-(3)-decenoyl-ACP. Can catalyze the dehydratase reaction for beta-hydroxyacyl-ACPs with saturated chain lengths up to 16:0, being most active on intermediate chain length. The chain is 3-hydroxydecanoyl-[acyl-carrier-protein] dehydratase from Hyphomonas neptunium (strain ATCC 15444).